We begin with the raw amino-acid sequence, 136 residues long: Large ribosomal subunit protein uL16c (136 aa).

Belongs to the universal ribosomal protein uL16 family. In terms of assembly, part of the 50S ribosomal subunit.

The protein resides in the plastid. Its subcellular location is the chloroplast. This Phaseolus angularis (Azuki bean) protein is Large ribosomal subunit protein uL16c.